A 195-amino-acid chain; its full sequence is Molybdenum cofactor guanylyltransferase (195 aa).

GTP contacts are provided by residues 12-14, Lys-25, Asn-53, Asp-70, and Asp-100; that span reads LAG. Position 100 (Asp-100) interacts with Mg(2+).

Belongs to the MobA family. As to quaternary structure, monomer. Requires Mg(2+) as cofactor.

The protein resides in the cytoplasm. The enzyme catalyses Mo-molybdopterin + GTP + H(+) = Mo-molybdopterin guanine dinucleotide + diphosphate. Functionally, transfers a GMP moiety from GTP to Mo-molybdopterin (Mo-MPT) cofactor (Moco or molybdenum cofactor) to form Mo-molybdopterin guanine dinucleotide (Mo-MGD) cofactor. The chain is Molybdenum cofactor guanylyltransferase from Vibrio vulnificus (strain YJ016).